We begin with the raw amino-acid sequence, 1146 residues long: Probable phospholipid-transporting ATPase IIB (1146 aa).

The Cytoplasmic portion of the chain corresponds to Met-1 to Thr-143. A helical transmembrane segment spans residues Phe-144–Val-164. The Extracellular portion of the chain corresponds to Ser-165–Ala-172. The helical transmembrane segment at Leu-173 to Ile-193 threads the bilayer. Topologically, residues Ala-194–Lys-381 are cytoplasmic. A helical membrane pass occupies residues Ala-382 to Gly-402. Over Pro-403–Asn-407 the chain is Extracellular. Residues Leu-408–Leu-427 form a helical membrane-spanning segment. Residues Asp-428 to Gly-938 are Cytoplasmic-facing. Asp-467 functions as the 4-aspartylphosphate intermediate in the catalytic mechanism. ATP is bound by residues Asp-467, Lys-468, and Thr-469. A Mg(2+)-binding site is contributed by Asp-467. Thr-469 contacts Mg(2+). Polar residues predominate over residues Val-508–Ser-519. The segment at Val-508–Ser-535 is disordered. 11 residues coordinate ATP: Glu-590, Phe-632, Lys-637, Lys-656, Arg-685, Thr-686, Thr-765, Gly-766, Asp-767, Arg-847, and Lys-853. Asp-873 lines the Mg(2+) pocket. Positions 876 and 877 each coordinate ATP. Asp-877 contacts Mg(2+). The helical transmembrane segment at Leu-939–Leu-959 threads the bilayer. At Tyr-960–Gln-961 the chain is on the extracellular side. Residues Gly-962 to Leu-982 form a helical membrane-spanning segment. The Cytoplasmic segment spans residues Asp-983 to Thr-1011. The chain crosses the membrane as a helical span at residues Phe-1012–Leu-1032. The Extracellular segment spans residues Leu-1033–His-1040. A helical transmembrane segment spans residues Val-1041 to Ile-1061. The Cytoplasmic portion of the chain corresponds to Arg-1062–His-1065. Residues Trp-1066–Leu-1086 traverse the membrane as a helical segment. The Extracellular segment spans residues Asn-1087–Phe-1105. Residues Ile-1106–Val-1128 form a helical membrane-spanning segment. Residues Leu-1129 to Ser-1146 lie on the Cytoplasmic side of the membrane.

The protein belongs to the cation transport ATPase (P-type) (TC 3.A.3) family. Type IV subfamily. Mg(2+) serves as cofactor. In terms of tissue distribution, found in most tissues except spleen and muscle. Most abundant in testis. Also detected in fetal tissues.

The protein resides in the golgi apparatus. It localises to the trans-Golgi network membrane. It catalyses the reaction ATP + H2O + phospholipidSide 1 = ADP + phosphate + phospholipidSide 2.. This Mus musculus (Mouse) protein is Probable phospholipid-transporting ATPase IIB (Atp9b).